The following is a 554-amino-acid chain: uncharacterized protein (554 aa).

To M.jannaschii MJ0047, MJ0162 and MJ1236.

This is an uncharacterized protein from Synechocystis sp. (strain ATCC 27184 / PCC 6803 / Kazusa).